A 199-amino-acid chain; its full sequence is Segregation and condensation protein B (199 aa).

Belongs to the ScpB family. In terms of assembly, homodimer. Homodimerization may be required to stabilize the binding of ScpA to the Smc head domains. Component of a cohesin-like complex composed of ScpA, ScpB and the Smc homodimer, in which ScpA and ScpB bind to the head domain of Smc. The presence of the three proteins is required for the association of the complex with DNA.

It localises to the cytoplasm. Its function is as follows. Participates in chromosomal partition during cell division. May act via the formation of a condensin-like complex containing Smc and ScpA that pull DNA away from mid-cell into both cell halves. The chain is Segregation and condensation protein B from Leuconostoc mesenteroides subsp. mesenteroides (strain ATCC 8293 / DSM 20343 / BCRC 11652 / CCM 1803 / JCM 6124 / NCDO 523 / NBRC 100496 / NCIMB 8023 / NCTC 12954 / NRRL B-1118 / 37Y).